Consider the following 419-residue polypeptide: GTPase Obg (419 aa).

An Obg domain is found at 1 to 156; sequence MRFVDYVSIE…FYLDLQLKVM (156 aa). An OBG-type G domain is found at 157–334; it reads ADIGLVGKPN…LEEKQKKLEI (178 aa). GTP-binding positions include 163–170, 188–192, 209–212, 278–281, and 315–317; these read GKPNAGKS, FTTLV, DLPG, NKCD, and NII. Ser170 and Thr190 together coordinate Mg(2+). The OCT domain occupies 342–419; it reads IEFNLKAPFL…RIYEFEFHWN (78 aa).

It belongs to the TRAFAC class OBG-HflX-like GTPase superfamily. OBG GTPase family. Monomer. Mg(2+) serves as cofactor.

Its subcellular location is the cytoplasm. Functionally, an essential GTPase which binds GTP, GDP and possibly (p)ppGpp with moderate affinity, with high nucleotide exchange rates and a fairly low GTP hydrolysis rate. Plays a role in control of the cell cycle, stress response, ribosome biogenesis and in those bacteria that undergo differentiation, in morphogenesis control. In Mesomycoplasma hyopneumoniae (strain 232) (Mycoplasma hyopneumoniae), this protein is GTPase Obg.